The primary structure comprises 256 residues: Type III pantothenate kinase (256 aa).

An ATP-binding site is contributed by 7–14 (DVGNTRLK). Residues tyrosine 96 and 103 to 106 (GADR) each bind substrate. The active-site Proton acceptor is the aspartate 105. Threonine 133 lines the ATP pocket. Threonine 183 contacts substrate.

The protein belongs to the type III pantothenate kinase family. As to quaternary structure, homodimer. The cofactor is NH4(+). K(+) is required as a cofactor.

It is found in the cytoplasm. It catalyses the reaction (R)-pantothenate + ATP = (R)-4'-phosphopantothenate + ADP + H(+). Its pathway is cofactor biosynthesis; coenzyme A biosynthesis; CoA from (R)-pantothenate: step 1/5. Functionally, catalyzes the phosphorylation of pantothenate (Pan), the first step in CoA biosynthesis. This chain is Type III pantothenate kinase, found in Verminephrobacter eiseniae (strain EF01-2).